Reading from the N-terminus, the 390-residue chain is 8-demethyl-8-(2-methoxy-alpha-L-rhamnosyl)-tetracenomycin-C 3'-O-methyltransferase (390 aa).

S-adenosyl-L-methionine is bound by residues 202–208 (ELGIGGY), serine 217, aspartate 234, 252–253 (SQ), and aspartate 275. Position 275 (aspartate 275) interacts with Mg(2+). Histidine 278 serves as the catalytic Proton acceptor. The Mg(2+) site is built by glutamate 303 and aspartate 304.

Belongs to the methyltransferase OleY/MycE family. Mg(2+) is required as a cofactor.

It catalyses the reaction 8-demethyl-8-(2-O-methyl-alpha-L-rhamnosyl)-tetracenomycin C + S-adenosyl-L-methionine = 8-demethyl-8-(2,3-di-O-methyl-alpha-L-rhamnosyl)-tetracenomycin C + S-adenosyl-L-homocysteine + H(+). The protein operates within antibiotic biosynthesis. In terms of biological role, O-methyltransferase involved in the biosynthesis of the permethylated L-rhamnose moiety of elloramycin, an antitumor polyketide. Mediates the methylation of the hydroxy groups at the 3'-position after the sugar moiety has been attached to the aglycon. In Streptomyces olivaceus, this protein is 8-demethyl-8-(2-methoxy-alpha-L-rhamnosyl)-tetracenomycin-C 3'-O-methyltransferase.